A 134-amino-acid polypeptide reads, in one-letter code: Large ribosomal subunit protein bL17 (134 aa).

Belongs to the bacterial ribosomal protein bL17 family. Part of the 50S ribosomal subunit. Contacts protein L32.

This is Large ribosomal subunit protein bL17 from Aromatoleum aromaticum (strain DSM 19018 / LMG 30748 / EbN1) (Azoarcus sp. (strain EbN1)).